Here is a 290-residue protein sequence, read N- to C-terminus: ATP synthase gamma chain (290 aa).

Belongs to the ATPase gamma chain family. In terms of assembly, F-type ATPases have 2 components, CF(1) - the catalytic core - and CF(0) - the membrane proton channel. CF(1) has five subunits: alpha(3), beta(3), gamma(1), delta(1), epsilon(1). CF(0) has three main subunits: a, b and c.

The protein localises to the cell inner membrane. Functionally, produces ATP from ADP in the presence of a proton gradient across the membrane. The gamma chain is believed to be important in regulating ATPase activity and the flow of protons through the CF(0) complex. In Chelativorans sp. (strain BNC1), this protein is ATP synthase gamma chain.